A 355-amino-acid polypeptide reads, in one-letter code: Nuclear hormone receptor family member nhr-127 (355 aa).

Positions 10 to 86 (SIPCEVCKNQ…AGMKAEKIQK (77 aa)) form a DNA-binding region, nuclear receptor. 2 NR C4-type zinc fingers span residues 13–33 (CEVC…CGAC) and 49–69 (CKDG…CRYC). The region spanning 126 to 355 (NPHNASEGCS…IVQIVQNNFY (230 aa)) is the NR LBD domain.

This sequence belongs to the nuclear hormone receptor family.

The protein resides in the nucleus. Orphan nuclear receptor. May play a role in modulation of lifespan and immunity. This chain is Nuclear hormone receptor family member nhr-127 (nhr-127), found in Caenorhabditis elegans.